The sequence spans 396 residues: Protein Njmu-R1 (396 aa).

The segment at 1-78 (MLPSLQESMD…SGDDFSLSLA (78 aa)) is disordered. Residues Ser-8 and Ser-18 each carry the phosphoserine modification. The span at 9–24 (MDGDEKELESSEEGGS) shows a compositional bias: acidic residues. The segment covering 58-67 (GSPSGTNAET) has biased composition (polar residues).

As to quaternary structure, component of the complex WDR11 composed of C17orf75, FAM91A1 and WDR11; FAM91A1 and WDR11 are required for proper location of the complex. Interacts with TBC1D23; this interaction may be indirect and recruits TBC1D23 to AP-1-derived vesicles. In terms of tissue distribution, highly expressed in testis and also expressed in fetal testis.

It is found in the golgi apparatus. Its subcellular location is the trans-Golgi network. The protein resides in the cytoplasmic vesicle. As component of the WDR11 complex acts together with TBC1D23 to facilitate the golgin-mediated capture of vesicles generated using AP-1. May have a role in spermatogenesis. This Homo sapiens (Human) protein is Protein Njmu-R1 (C17orf75).